A 258-amino-acid chain; its full sequence is Leucyl/phenylalanyl-tRNA--protein transferase (258 aa).

This sequence belongs to the L/F-transferase family.

It localises to the cytoplasm. The catalysed reaction is N-terminal L-lysyl-[protein] + L-leucyl-tRNA(Leu) = N-terminal L-leucyl-L-lysyl-[protein] + tRNA(Leu) + H(+). It catalyses the reaction N-terminal L-arginyl-[protein] + L-leucyl-tRNA(Leu) = N-terminal L-leucyl-L-arginyl-[protein] + tRNA(Leu) + H(+). The enzyme catalyses L-phenylalanyl-tRNA(Phe) + an N-terminal L-alpha-aminoacyl-[protein] = an N-terminal L-phenylalanyl-L-alpha-aminoacyl-[protein] + tRNA(Phe). Its function is as follows. Functions in the N-end rule pathway of protein degradation where it conjugates Leu, Phe and, less efficiently, Met from aminoacyl-tRNAs to the N-termini of proteins containing an N-terminal arginine or lysine. The chain is Leucyl/phenylalanyl-tRNA--protein transferase from Alkalilimnicola ehrlichii (strain ATCC BAA-1101 / DSM 17681 / MLHE-1).